Consider the following 525-residue polypeptide: MAAVVLAATRLLRGSGSWGCSRLRFGPPAYRRFSSGGAYPNIPLSSPLPGVPKPVFATVDGQEKFETKVTTLDNGLRVASQNKFGQFCTVGILINSGSRYEAKYLSGIAHFLEKLAFSSTARFDSKDEILLTLEKHGGICDCQTSRDTTMYAVSADSKGLDTVVGLLADVVLQPRLTDEEVEMTRMTVQFELEDLNLRPDPEPLLTEMIHEAAYRENTVGLHRFCPTENIAKINREVLHSYLRNYYTPDRMVLAGVGVEHEHLVDCARKYLLGIQPAWGSAEAVDIDRSVAQYTGGIAKRERDMSNVSLGPTPIPELTHIMVGLESCSFLEEDFIPFAVLNMMMGGGGSFSAGGPGKGMFSRLYLNVLNRHHWMYNATSYHHSYEDTGLLCIHASADPRQVREMVEIITKEFILMSGTVDAVELERAKTQLTSMLMMNLESRPVIFEDVGRQVLATRSRKLPHELCTLIRNVKPEDVKRVASKMLRGKPAVAALGDLTDLPTYEHIQTALSSKDGRLPRTYRLFR.

The transit peptide at 1 to 33 (MAAVVLAATRLLRGSGSWGCSRLRFGPPAYRRF) directs the protein to the mitochondrion. Residue lysine 64 is modified to N6-succinyllysine. Lysine 299 carries the post-translational modification N6-acetyllysine.

Belongs to the peptidase M16 family. Heterodimer of PMPCA (alpha) and PMPCB (beta) subunits, forming the mitochondrial processing protease (MPP) in which PMPCA is involved in substrate recognition and binding and PMPCB is the catalytic subunit.

It localises to the mitochondrion matrix. Its subcellular location is the mitochondrion inner membrane. Functionally, substrate recognition and binding subunit of the essential mitochondrial processing protease (MPP), which cleaves the mitochondrial sequence off newly imported precursors proteins. The sequence is that of Mitochondrial-processing peptidase subunit alpha (PMPCA) from Pongo abelii (Sumatran orangutan).